Here is a 204-residue protein sequence, read N- to C-terminus: Urease accessory protein UreG (204 aa).

11-18 (GPVGAGKT) serves as a coordination point for GTP.

This sequence belongs to the SIMIBI class G3E GTPase family. UreG subfamily. As to quaternary structure, homodimer. UreD, UreF and UreG form a complex that acts as a GTP-hydrolysis-dependent molecular chaperone, activating the urease apoprotein by helping to assemble the nickel containing metallocenter of UreC. The UreE protein probably delivers the nickel.

The protein resides in the cytoplasm. In terms of biological role, facilitates the functional incorporation of the urease nickel metallocenter. This process requires GTP hydrolysis, probably effectuated by UreG. The protein is Urease accessory protein UreG of Staphylococcus aureus (strain bovine RF122 / ET3-1).